Consider the following 149-residue polypeptide: Transcriptional repressor NrdR (149 aa).

Residues 3 to 34 fold into a zinc finger; it reads CPFCSHLETQVIETRVFEDAASIRRRRQCAAC. The region spanning 49–139 is the ATP-cone domain; it reads PAVVKKDGRR…VYRSFEGIDD (91 aa).

It belongs to the NrdR family. Zn(2+) is required as a cofactor.

In terms of biological role, negatively regulates transcription of bacterial ribonucleotide reductase nrd genes and operons by binding to NrdR-boxes. This is Transcriptional repressor NrdR from Verminephrobacter eiseniae (strain EF01-2).